Here is a 491-residue protein sequence, read N- to C-terminus: Lysosomal Pro-X carboxypeptidase (491 aa).

The N-terminal stretch at 1–17 (MGCRALLLLSFLLLGAA) is a signal peptide. The propeptide occupies 18-43 (TTIPPRLKTLGSPHLSASPTPDPAVA). N99 carries an N-linked (GlcNAc...) asparagine glycan. S177 acts as the Charge relay system in catalysis. The SKS domain stretch occupies residues 192-332 (HIVVGALAAS…QNIFQALSVY (141 aa)). 4 disulfides stabilise this stretch: C213-C370, C231-C308, C262-C341, and C362-C392. Residues N315, N334, and N343 are each glycosylated (N-linked (GlcNAc...) asparagine). N-linked (GlcNAc...) asparagine glycosylation is present at N413. Residues D428 and H453 each act as charge relay system in the active site.

Belongs to the peptidase S28 family. Homodimer.

It localises to the lysosome. The enzyme catalyses Cleavage of a -Pro-|-Xaa bond to release a C-terminal amino acid.. In terms of biological role, cleaves C-terminal amino acids linked to proline in peptides such as angiotensin II, III and des-Arg9-bradykinin. This cleavage occurs at acidic pH, but enzymatic activity is retained with some substrates at neutral pH. The protein is Lysosomal Pro-X carboxypeptidase (Prcp) of Mus musculus (Mouse).